A 597-amino-acid chain; its full sequence is MTLEKNRHANKGTSWTWMIYKFVVGVITVAILVLFITQKSVSQAQDKLRVEQQAIFSDQDTLQLKHIFHHGTGPKNYRLHRRLDITSEYLAKHQPYFTTLTQQLSEPVLEEHIASDNLDKIYQQSDWPEIHKGKNPFSIELPFKKADSEATRLKERNTLNFIESYLNYARDIKGDAQILNRINLDWIHDEIKVPNVTDRDTVVTLATISSNAYVRYPKDDDEKRKSDWIDLGDWDPNREDDDVNFGWDDIGLRGHVFVSKDNKTVVIGIKGTSGAGLPGGGSDETGGNDKTNDNLLFSCCCARISYMWTTVCDCYEKTYTCNQDCLEKELRKEDKYYQAVLELYRNVTDIYPPESTDIWVTGHSLGGALASLLGRTFGLPAVAFEAPGEMLATRRLHLPSPPGLPQHMENIWHFGNTADPIYMGVCNGASSTCNLAGYAMETTCHTGLQCVYDVVTDKGWSVNLLNHRIHTVIDDIILTYNETAPCAPSPPCRDCFNWRFVAHDDNEKDEPKLPNPLRSSSKSTLSTKTTSLKSSSTYSGSTSSSTVTKTTQTSPISSASPTDQDPPKKCLKRTWYGWCTKWGYDDDDDDEDTFERK.

Residues 1-15 (MTLEKNRHANKGTSW) lie on the Cytoplasmic side of the membrane. The chain crosses the membrane as a helical; Signal-anchor for type II membrane protein span at residues 16–36 (TWMIYKFVVGVITVAILVLFI). The Lumenal segment spans residues 37-597 (TQKSVSQAQD…DDDEDTFERK (561 aa)). Residues N195, N262, and N346 are each glycosylated (N-linked (GlcNAc...) asparagine). The active-site Charge relay system is S364. An N-linked (GlcNAc...) asparagine glycan is attached at N481. The interval 507–570 (EKDEPKLPNP…PTDQDPPKKC (64 aa)) is disordered. Positions 519 to 554 (SSSKSTLSTKTTSLKSSSTYSGSTSSSTVTKTTQTS) are enriched in low complexity.

This sequence belongs to the AB hydrolase superfamily. Lipase family. As to quaternary structure, binds to both phosphatidylinositol (PI) and phosphatidylinositol 3,5-bisphosphate (PIP2).

It localises to the endosome. Its subcellular location is the multivesicular body membrane. It is found in the prevacuolar compartment membrane. It catalyses the reaction a triacylglycerol + H2O = a diacylglycerol + a fatty acid + H(+). In terms of biological role, lipase which is essential for lysis of subvacuolar cytoplasm to vacuole targeted bodies and intravacuolar autophagic bodies. Involved in the lysis of intravacuolar multivesicular body (MVB) vesicles. The intravacuolar membrane disintegration by ATG15 is critical to life span extension. This Candida albicans (strain SC5314 / ATCC MYA-2876) (Yeast) protein is Putative lipase ATG15 (ATG15).